A 439-amino-acid chain; its full sequence is Trigger factor (439 aa).

Residues 162-247 form the PPIase FKBP-type domain; that stretch reads GDTVTIDYVG…IHEVKAKQLP (86 aa).

The protein belongs to the FKBP-type PPIase family. Tig subfamily.

The protein resides in the cytoplasm. It catalyses the reaction [protein]-peptidylproline (omega=180) = [protein]-peptidylproline (omega=0). Functionally, involved in protein export. Acts as a chaperone by maintaining the newly synthesized protein in an open conformation. Functions as a peptidyl-prolyl cis-trans isomerase. This chain is Trigger factor, found in Lactobacillus delbrueckii subsp. bulgaricus (strain ATCC 11842 / DSM 20081 / BCRC 10696 / JCM 1002 / NBRC 13953 / NCIMB 11778 / NCTC 12712 / WDCM 00102 / Lb 14).